The chain runs to 90 residues: DNA/RNA-binding protein Alba (90 aa).

An N6-acetyllysine modification is found at K8.

This sequence belongs to the histone-like Alba family. Post-translationally, acetylated. Acetylation at Lys-8 decreases DNA-binding affinity.

It localises to the cytoplasm. It is found in the chromosome. Functionally, binds double-stranded DNA tightly but without sequence specificity. Involved in DNA compaction. The protein is DNA/RNA-binding protein Alba of Nanoarchaeum equitans (strain Kin4-M).